A 267-amino-acid polypeptide reads, in one-letter code: Phosphonoacetaldehyde hydrolase (267 aa).

The active-site Nucleophile is the aspartate 10. 2 residues coordinate Mg(2+): aspartate 10 and alanine 12. Lysine 51 functions as the Schiff-base intermediate with substrate in the catalytic mechanism. Aspartate 184 lines the Mg(2+) pocket.

It belongs to the HAD-like hydrolase superfamily. PhnX family. As to quaternary structure, homodimer. The cofactor is Mg(2+).

The enzyme catalyses phosphonoacetaldehyde + H2O = acetaldehyde + phosphate + H(+). Involved in phosphonate degradation. The sequence is that of Phosphonoacetaldehyde hydrolase from Paraburkholderia phytofirmans (strain DSM 17436 / LMG 22146 / PsJN) (Burkholderia phytofirmans).